The primary structure comprises 579 residues: Putative diflavin flavoprotein A 2 (579 aa).

Positions 50 to 243 (QNGTTYNSYL…GKIKIIANGH (194 aa)) are zinc metallo-hydrolase. Fe cation-binding residues include His-99, Glu-101, Asp-103, His-166, Asp-185, and His-243. A Flavodoxin-like domain is found at 272-460 (VGLFYVADYG…MLASWVSQAS (189 aa)). The interval 461 to 579 (LQPLGFTIAV…VRHRKVGNYY (119 aa)) is flavodoxin-reductase-like.

The protein in the N-terminal section; belongs to the zinc metallo-hydrolase group 3 family. It in the C-terminal section; belongs to the flavodoxin reductase family. Requires Fe cation as cofactor.

Its function is as follows. Mediates electron transfer from NADH to oxygen, reducing it to water. This modular protein has 3 redox cofactors, in other organisms the same activity requires 2 or 3 proteins. This chain is Putative diflavin flavoprotein A 2 (dfa2), found in Nostoc sp. (strain PCC 7120 / SAG 25.82 / UTEX 2576).